We begin with the raw amino-acid sequence, 180 residues long: MSRLKKFYTEEIRKSLFEKFGYANKMQIPVLKKIVLSMGLAEAAKDKNLFQAHLEELTMISGQKPLVTKARNSIAGFKLREGQGIGAKVTLRGIRMYDFMDRFCNIVSPRIRDFRGFSNKGDGRGCYSVGLDDQQIFPEINLDRVKRTQGLNITWVTTAQTDDECTTLLELMGLRFKKAQ.

Belongs to the universal ribosomal protein uL5 family. Part of the 50S ribosomal subunit; part of the 5S rRNA/L5/L18/L25 subcomplex. Contacts the 5S rRNA and the P site tRNA. Forms a bridge to the 30S subunit in the 70S ribosome.

Functionally, this is one of the proteins that bind and probably mediate the attachment of the 5S RNA into the large ribosomal subunit, where it forms part of the central protuberance. In the 70S ribosome it contacts protein S13 of the 30S subunit (bridge B1b), connecting the 2 subunits; this bridge is implicated in subunit movement. Contacts the P site tRNA; the 5S rRNA and some of its associated proteins might help stabilize positioning of ribosome-bound tRNAs. The sequence is that of Large ribosomal subunit protein uL5 from Chlamydia pneumoniae (Chlamydophila pneumoniae).